A 498-amino-acid polypeptide reads, in one-letter code: uncharacterized protein (498 aa).

Disordered stretches follow at residues 1–48 (MSND…ARPK), 99–134 (NDLHPLDNDSTRTSKTLKNSSEVLTASKLTDEGNSK), and 190–209 (NSENSNVNNGSSLNGNTSSN). The segment covering 35–44 (ELSTPKQVNQ) has biased composition (polar residues). Basic and acidic residues predominate over residues 99-110 (NDLHPLDNDSTR). A compositionally biased stretch (polar residues) spans 111-126 (TSKTLKNSSEVLTASK).

This is an uncharacterized protein from Schizosaccharomyces pombe (strain 972 / ATCC 24843) (Fission yeast).